The primary structure comprises 95 residues: Aspartyl/glutamyl-tRNA(Asn/Gln) amidotransferase subunit C (95 aa).

It belongs to the GatC family. As to quaternary structure, heterotrimer of A, B and C subunits.

It carries out the reaction L-glutamyl-tRNA(Gln) + L-glutamine + ATP + H2O = L-glutaminyl-tRNA(Gln) + L-glutamate + ADP + phosphate + H(+). The enzyme catalyses L-aspartyl-tRNA(Asn) + L-glutamine + ATP + H2O = L-asparaginyl-tRNA(Asn) + L-glutamate + ADP + phosphate + 2 H(+). In terms of biological role, allows the formation of correctly charged Asn-tRNA(Asn) or Gln-tRNA(Gln) through the transamidation of misacylated Asp-tRNA(Asn) or Glu-tRNA(Gln) in organisms which lack either or both of asparaginyl-tRNA or glutaminyl-tRNA synthetases. The reaction takes place in the presence of glutamine and ATP through an activated phospho-Asp-tRNA(Asn) or phospho-Glu-tRNA(Gln). This is Aspartyl/glutamyl-tRNA(Asn/Gln) amidotransferase subunit C from Rhodopseudomonas palustris (strain ATCC BAA-98 / CGA009).